A 192-amino-acid chain; its full sequence is Interleukin-18 (192 aa).

Residues 1–35 (MAAMSEDSCVNFKEMMFIDNTLYFIPEENGDLESD) constitute a propeptide that is removed on maturation.

Belongs to the IL-1 family. Forms a ternary complex with ligand-binding receptor subunit IL18R1 and signaling receptor subunit IL18RAP at the plasma membrane. Mature IL18 first binds to IL18R1 forming a low affinity binary complex, which then interacts with IL18RAP to form a high affinity ternary complex that signals inside the cell. Interacts with cargo receptor TMED10; the interaction mediates the translocation from the cytoplasm into the ERGIC (endoplasmic reticulum-Golgi intermediate compartment) and thereby secretion. In terms of processing, the pro-IL-18 precursor is processed by CASP1 to yield its mature, active form. The pro-IL-18 precursor is however not processed by Casp4/Casp11 in rodents. The pro-IL-18 precursor features autoinhibitory interactions between the propeptide and the post-cleavage-site region, preventing recognition by the IL18R1 receptor. Processing by CASP1 induces conformational changes to generate critical receptor-binding sites. The mature form is then secreted and released in the extracellular milieu by passing through the gasdermin-D (GSDMD) pore. In contrast, cleavage by CASP3 inactivates IL18.

The protein resides in the cytoplasm. Its subcellular location is the secreted. In terms of biological role, pro-inflammatory cytokine primarily involved in epithelial barrier repair, polarized T-helper 1 (Th1) cell and natural killer (NK) cell immune responses. Upon binding to IL18R1 and IL18RAP, forms a signaling ternary complex which activates NF-kappa-B, triggering synthesis of inflammatory mediators. Synergizes with IL12/interleukin-12 to induce IFNG synthesis from T-helper 1 (Th1) cells and natural killer (NK) cells. Involved in transduction of inflammation downstream of pyroptosis: its mature form is specifically released in the extracellular milieu by passing through the gasdermin-D (GSDMD) pore. The chain is Interleukin-18 from Mus musculus (Mouse).